Here is a 150-residue protein sequence, read N- to C-terminus: Transthyretin (150 aa).

An N-terminal signal peptide occupies residues 1–20; the sequence is MAFHSTLLVFLAGLVFLSEA. Cysteine 33 is subject to Sulfocysteine. L-thyroxine is bound by residues lysine 38, glutamate 77, and serine 140.

This sequence belongs to the transthyretin family. Homotetramer. Dimer of dimers. In the homotetramer, subunits assemble around a central channel that can accommodate two ligand molecules. Sulfonation of the reactive cysteine Cys-33 enhances the stability of the native conformation of TTR, avoiding misassembly of the protein leading to amyloid formation. As to expression, detected in serum (at protein level). Detected in liver and choroid plexus.

It localises to the secreted. In terms of biological role, thyroid hormone-binding protein. Probably transports thyroxine from the bloodstream to the brain. In Gallus gallus (Chicken), this protein is Transthyretin (TTR).